The following is a 159-amino-acid chain: Eukaryotic translation initiation factor 5A-2 (159 aa).

Basic and acidic residues predominate over residues 1-12 (MSDEEHQFESKA). The segment at 1–23 (MSDEEHQFESKADAGASKTYPQQ) is disordered. The residue at position 52 (Lys-52) is a Hypusine.

Belongs to the eIF-5A family. In terms of processing, lys-52 undergoes hypusination, a unique post-translational modification that consists in the addition of a butylamino group from spermidine to lysine side chain, leading to the formation of the unusual amino acid hypusine. eIF-5As are the only known proteins to undergo this modification, which is essential for their function.

Translation factor that promotes translation elongation and termination, particularly upon ribosome stalling at specific amino acid sequence contexts. Binds between the exit (E) and peptidyl (P) site of the ribosome and promotes rescue of stalled ribosome: specifically required for efficient translation of polyproline-containing peptides as well as other motifs that stall the ribosome. Acts as a ribosome quality control (RQC) cofactor by joining the RQC complex to facilitate peptidyl transfer during CAT tailing step. The chain is Eukaryotic translation initiation factor 5A-2 (EIF-5A2) from Nicotiana plumbaginifolia (Leadwort-leaved tobacco).